Here is a 184-residue protein sequence, read N- to C-terminus: Holliday junction branch migration complex subunit RuvA (184 aa).

The interval 1 to 64 (MIKAIEGVVT…EDANLLYGFL (64 aa)) is domain I. Positions 65–134 (DANEQKMFEM…IAELSDTKLI (70 aa)) are domain II. The interval 134–137 (ISDE) is flexible linker. A domain III region spans residues 138-184 (SVPSYQNEALLALEALGFKREKIVKILPDCKSENTSDLIKEALKKLG).

Belongs to the RuvA family. Homotetramer. Forms an RuvA(8)-RuvB(12)-Holliday junction (HJ) complex. HJ DNA is sandwiched between 2 RuvA tetramers; dsDNA enters through RuvA and exits via RuvB. An RuvB hexamer assembles on each DNA strand where it exits the tetramer. Each RuvB hexamer is contacted by two RuvA subunits (via domain III) on 2 adjacent RuvB subunits; this complex drives branch migration. In the full resolvosome a probable DNA-RuvA(4)-RuvB(12)-RuvC(2) complex forms which resolves the HJ.

Its subcellular location is the cytoplasm. Functionally, the RuvA-RuvB-RuvC complex processes Holliday junction (HJ) DNA during genetic recombination and DNA repair, while the RuvA-RuvB complex plays an important role in the rescue of blocked DNA replication forks via replication fork reversal (RFR). RuvA specifically binds to HJ cruciform DNA, conferring on it an open structure. The RuvB hexamer acts as an ATP-dependent pump, pulling dsDNA into and through the RuvAB complex. HJ branch migration allows RuvC to scan DNA until it finds its consensus sequence, where it cleaves and resolves the cruciform DNA. This Campylobacter concisus (strain 13826) protein is Holliday junction branch migration complex subunit RuvA.